A 524-amino-acid chain; its full sequence is Cytochrome P450 52A6 (524 aa).

Residues 17–34 (WYTVITLAALVFLISSNI) traverse the membrane as a helical segment. Cysteine 472 lines the heme pocket.

It belongs to the cytochrome P450 family. Heme serves as cofactor.

Its subcellular location is the membrane. Functionally, together with an NADPH cytochrome P450 the enzyme system catalyzes the terminal hydroxylation as the first step in the assimilation of alkanes and fatty acids. Preferentially hydroxylates hexadecane. The protein is Cytochrome P450 52A6 (CYP52A6) of Candida tropicalis (Yeast).